A 333-amino-acid polypeptide reads, in one-letter code: MGRAPCCDKANVKKGPWSPEEDVKLKDYIDKYGTGGNWIALPQKIGLKRCGKSCRLRWLNYLRPNIKHGGFSEEEDRIILSLYISIGSRWSIIAAQLPGRTDNDIKNYWNTKLKKKLLGRQKQMNRQDSITDSTENNLSNNNNNKSPQNLSNSALERLQLHMQLQNLQSPFSSFYNNPILWPKLHPLLQSTTTNQNPKLASQESFHPLGVNVDHQHNNTKLAQINNGASSLYSENVEQSQNPAHEFQPNFGFSQDLRLDNHNMDFMNRGVSKELFQVGNEFELTNGSSWWSEEVELERKTTSSSSWGSASVLDQTTEGMVMLQDYAQMSYHSV.

HTH myb-type domains lie at 9-62 (KANV…LNYL) and 63-117 (RPNI…KKKL). 2 DNA-binding regions (H-T-H motif) span residues 38-62 (WIAL…LNYL) and 90-113 (WSII…NTKL). The tract at residues 119 to 150 (GRQKQMNRQDSITDSTENNLSNNNNNKSPQNL) is disordered. Residues 122–135 (KQMNRQDSITDSTE) are compositionally biased toward polar residues. Over residues 136-150 (NNLSNNNNNKSPQNL) the composition is skewed to low complexity.

Expressed in leaves, roots (endodermis-specific) and seedlings.

The protein resides in the nucleus. Functionally, transcription factors that activates genes required for endodermal differentiation but represses genes involved in proliferative divisions, thus regulating the transition from proliferation to differentiation in root endodermis. Required for Casparian strip formation by positively regulating the expression of the Casparian strip genes CASP1, PER64 and ESB1 and other endodermis-specific genes, thus triggering correct localized lignin biosynthesis in root endodermis and subsequently regulating global ion homeostasis. This is Transcription factor MYB36 from Arabidopsis thaliana (Mouse-ear cress).